Here is a 1353-residue protein sequence, read N- to C-terminus: Inhibitor of Bruton tyrosine kinase (1353 aa).

ANK repeat units lie at residues 51 to 80 and 85 to 114; these read FGRNALHLVSSCGKKGVLDWLIQKGVDLLV and SGWTALHRSIFYGHIDCVWSLLKHGVSLYI. RCC1 repeat units follow at residues 141–194, 195–246, and 248–301; these read PTDV…FLSQ, KGQV…VLTE, and GCVY…LWTR. 2 consecutive BTB domains span residues 564–644 and 768–836; these read HDVT…DFLT and CDVT…VVIK. The ANK 3 repeat unit spans residues 806-835; sequence SSCAALEMPIHSDILKVILDYLYTDEAVVI. The disordered stretch occupies residues 970–1001; that stretch reads HSETMFKKAKTKAKKKPRKRSDSSGGYNLSDI. Over residues 976 to 988 the composition is skewed to basic residues; the sequence is KKAKTKAKKKPRK. The residue at position 990 (Ser990) is a Phosphoserine. The span at 992-1001 shows a compositional bias: polar residues; that stretch reads SSGGYNLSDI. Residues Ser1004, Ser1030, Ser1033, Ser1039, Ser1045, Ser1054, Ser1083, Ser1111, Ser1113, and Ser1116 each carry the phosphoserine modification. The segment at 1134 to 1155 is disordered; sequence KCGATPKSHLGKTVSHGVKLSQ.

Interacts with the PH domain of BTK. Isoform 2 does not interact with BTK. As to expression, expressed in DeFew, HEK293T, HeLa and in Jurkat, MC3 and NB4 lymphoid cells (at protein level). Isoform 1 is the predominant isoform expressed in all examined tissues and cell lines. Highly expressed in hemopoietic tissues (fetal liver, spleen, lymph node, thymus, peripheral blood leukocytes and bone marrow). Weakly or not expressed in other tissues.

Its subcellular location is the cytoplasm. The protein resides in the membrane. It is found in the nucleus. In terms of biological role, acts as an inhibitor of BTK tyrosine kinase activity, thereby playing a role in B-cell development. Down-regulates BTK kinase activity, leading to interference with BTK-mediated calcium mobilization and NF-kappa-B-driven transcription. The polypeptide is Inhibitor of Bruton tyrosine kinase (IBTK) (Homo sapiens (Human)).